The following is an 839-amino-acid chain: Probable E3 ubiquitin-protein ligase HUL4 (839 aa).

In terms of domain architecture, HECT spans 497-839 (QQKDLKKSLR…LEESQGYGFR (343 aa)). Cys807 acts as the Glycyl thioester intermediate in catalysis.

The protein belongs to the HUL4 family. As to quaternary structure, component of the TRAMP complex.

It localises to the nucleus. It carries out the reaction S-ubiquitinyl-[E2 ubiquitin-conjugating enzyme]-L-cysteine + [acceptor protein]-L-lysine = [E2 ubiquitin-conjugating enzyme]-L-cysteine + N(6)-ubiquitinyl-[acceptor protein]-L-lysine.. Probable E3 ubiquitin-protein ligase, component of the TRAMP complex which has a poly(A) RNA polymerase activity and is involved in a post-transcriptional quality control mechanism limiting inappropriate expression of genetic information. Polyadenylation is required for the degradative activity of the exosome on several of its nuclear RNA substrates. In Eremothecium gossypii (strain ATCC 10895 / CBS 109.51 / FGSC 9923 / NRRL Y-1056) (Yeast), this protein is Probable E3 ubiquitin-protein ligase HUL4 (HUL4).